The following is a 253-amino-acid chain: Uridine phosphorylase (253 aa).

This sequence belongs to the PNP/UDP phosphorylase family. Homohexamer.

It is found in the cytoplasm. The catalysed reaction is uridine + phosphate = alpha-D-ribose 1-phosphate + uracil. Its pathway is pyrimidine metabolism; UMP biosynthesis via salvage pathway; uracil from uridine (phosphorylase route): step 1/1. Functionally, catalyzes the reversible phosphorylytic cleavage of uridine to uracil and ribose-1-phosphate. This Klebsiella aerogenes (Enterobacter aerogenes) protein is Uridine phosphorylase (udp).